Consider the following 177-residue polypeptide: Large ribosomal subunit protein uL6 (177 aa).

Belongs to the universal ribosomal protein uL6 family. As to quaternary structure, part of the 50S ribosomal subunit.

This protein binds to the 23S rRNA, and is important in its secondary structure. It is located near the subunit interface in the base of the L7/L12 stalk, and near the tRNA binding site of the peptidyltransferase center. The polypeptide is Large ribosomal subunit protein uL6 (Ralstonia pickettii (strain 12J)).